The primary structure comprises 321 residues: tRNA U34 carboxymethyltransferase (321 aa).

Carboxy-S-adenosyl-L-methionine is bound by residues lysine 90, tryptophan 104, lysine 109, glycine 129, 151–153 (DPT), 180–181 (IE), methionine 195, tyrosine 199, and arginine 314.

The protein belongs to the class I-like SAM-binding methyltransferase superfamily. CmoB family. As to quaternary structure, homotetramer.

It catalyses the reaction carboxy-S-adenosyl-L-methionine + 5-hydroxyuridine(34) in tRNA = 5-carboxymethoxyuridine(34) in tRNA + S-adenosyl-L-homocysteine + H(+). In terms of biological role, catalyzes carboxymethyl transfer from carboxy-S-adenosyl-L-methionine (Cx-SAM) to 5-hydroxyuridine (ho5U) to form 5-carboxymethoxyuridine (cmo5U) at position 34 in tRNAs. This chain is tRNA U34 carboxymethyltransferase, found in Actinobacillus succinogenes (strain ATCC 55618 / DSM 22257 / CCUG 43843 / 130Z).